The following is a 273-amino-acid chain: Eukaryotic translation initiation factor 3 subunit G-2 (273 aa).

The interval 168–192 is disordered; the sequence is PPFMKDGGGGSGGKNWGRGRDRDDS. Over residues 173-183 the composition is skewed to gly residues; that stretch reads DGGGGSGGKNW. The RRM domain maps to 193 to 271; it reads SAVRISNLSE…LILCVEWSKP (79 aa).

The protein belongs to the eIF-3 subunit G family. In terms of assembly, component of the eukaryotic translation initiation factor 3 (eIF-3) complex. The eIF-3 complex interacts with pix.

Its subcellular location is the cytoplasm. RNA-binding component of the eukaryotic translation initiation factor 3 (eIF-3) complex, which is involved in protein synthesis of a specialized repertoire of mRNAs and, together with other initiation factors, stimulates binding of mRNA and methionyl-tRNAi to the 40S ribosome. The eIF-3 complex specifically targets and initiates translation of a subset of mRNAs involved in cell proliferation. This subunit can bind 18S rRNA. The chain is Eukaryotic translation initiation factor 3 subunit G-2 from Drosophila erecta (Fruit fly).